A 612-amino-acid chain; its full sequence is Dihydroxy-acid dehydratase (612 aa).

Residue aspartate 81 coordinates Mg(2+). Cysteine 122 is a binding site for [2Fe-2S] cluster. Residues aspartate 123 and lysine 124 each coordinate Mg(2+). Lysine 124 is subject to N6-carboxylysine. Residue cysteine 193 coordinates [2Fe-2S] cluster. Glutamate 489 serves as a coordination point for Mg(2+). The Proton acceptor role is filled by serine 515.

This sequence belongs to the IlvD/Edd family. In terms of assembly, homodimer. It depends on [2Fe-2S] cluster as a cofactor. The cofactor is Mg(2+).

It catalyses the reaction (2R)-2,3-dihydroxy-3-methylbutanoate = 3-methyl-2-oxobutanoate + H2O. It carries out the reaction (2R,3R)-2,3-dihydroxy-3-methylpentanoate = (S)-3-methyl-2-oxopentanoate + H2O. The protein operates within amino-acid biosynthesis; L-isoleucine biosynthesis; L-isoleucine from 2-oxobutanoate: step 3/4. It participates in amino-acid biosynthesis; L-valine biosynthesis; L-valine from pyruvate: step 3/4. In terms of biological role, functions in the biosynthesis of branched-chain amino acids. Catalyzes the dehydration of (2R,3R)-2,3-dihydroxy-3-methylpentanoate (2,3-dihydroxy-3-methylvalerate) into 2-oxo-3-methylpentanoate (2-oxo-3-methylvalerate) and of (2R)-2,3-dihydroxy-3-methylbutanoate (2,3-dihydroxyisovalerate) into 2-oxo-3-methylbutanoate (2-oxoisovalerate), the penultimate precursor to L-isoleucine and L-valine, respectively. In Xanthomonas axonopodis pv. citri (strain 306), this protein is Dihydroxy-acid dehydratase.